Here is a 374-residue protein sequence, read N- to C-terminus: Type II methyltransferase M.BbvI (374 aa).

The region spanning 3–347 (FRKGELFCGP…EAVLKTFARI (345 aa)) is the SAM-dependent MTase C5-type domain. The active site involves C92.

It belongs to the class I-like SAM-binding methyltransferase superfamily. C5-methyltransferase family.

It carries out the reaction a 2'-deoxycytidine in DNA + S-adenosyl-L-methionine = a 5-methyl-2'-deoxycytidine in DNA + S-adenosyl-L-homocysteine + H(+). A methylase, recognizes the double-stranded sequence 5'-GCAGC-3', methylates C-2 on both strands, and protects the DNA from cleavage by the BbvI endonuclease. The chain is Type II methyltransferase M.BbvI (bbvIM) from Brevibacillus brevis (Bacillus brevis).